The chain runs to 32 residues: Snaclec (32 aa).

As to quaternary structure, dimer; disulfide-linked. Expressed by the venom gland.

It is found in the secreted. Its function is as follows. Interferes with one step of hemostasis (modulation of platelet aggregation, or coagulation cascade, for example). The polypeptide is Snaclec (Bothrops diporus (Chaco lancehead)).